A 311-amino-acid chain; its full sequence is T-cell acute lymphocytic leukemia protein 1 homolog (311 aa).

Positions 1-14 are enriched in pro residues; it reads MTMDRPPAPPPPSS. Residues 1-67 are disordered; that stretch reads MTMDRPPAPP…RPSPGPPAAA (67 aa). Positions 15–25 are enriched in basic and acidic residues; that stretch reads DPRDARRHDPE. The bHLH domain occupies 179–231; sequence VRRIFTNSRERWRQQNVNGAFAELRKLIPTHPPDKKLSKNEILRLAMKYINFL. The disordered stretch occupies residues 265–311; it reads SPNSSCGSSLDGAASPDSFTEEHDTLDSKHARNLHHAILPVEGSAQR. Over residues 284–294 the composition is skewed to basic and acidic residues; sequence TEEHDTLDSKH.

Efficient DNA binding requires dimerization with another bHLH protein. Forms heterodimers with TCF3. Phosphorylated on serine residues.

The protein localises to the nucleus. Its function is as follows. Implicated in the genesis of hemopoietic malignancies. It may play an important role in hemopoietic differentiation. The chain is T-cell acute lymphocytic leukemia protein 1 homolog (TAL1) from Gallus gallus (Chicken).